Consider the following 115-residue polypeptide: MNRKFLPKRARLLNLNEFIFVFQKPERVKTTGITLFSRSNRLGYPRIGLAISKKYVKYAHERNRIKRHIRETFRTCQHNLLAKDFVLTIRSKEIIYYKNKTLIQELEKLWYHHLC.

This sequence belongs to the RnpA family. In terms of assembly, consists of a catalytic RNA component (M1 or rnpB) and a protein subunit.

The enzyme catalyses Endonucleolytic cleavage of RNA, removing 5'-extranucleotides from tRNA precursor.. Functionally, RNaseP catalyzes the removal of the 5'-leader sequence from pre-tRNA to produce the mature 5'-terminus. It can also cleave other RNA substrates such as 4.5S RNA. The protein component plays an auxiliary but essential role in vivo by binding to the 5'-leader sequence and broadening the substrate specificity of the ribozyme. The chain is Ribonuclease P protein component from Blochmanniella pennsylvanica (strain BPEN).